Consider the following 310-residue polypeptide: Probable L,D-transpeptidase ErfK/SrfK (310 aa).

A signal peptide spans 1-21; it reads MRRVNILCSFALLFASHTSLA. The L,D-TPase catalytic domain occupies 96 to 231; it reads KGIVVNVAEM…VPVGTRVQII (136 aa). Histidine 191 serves as the catalytic Proton donor/acceptor. Cysteine 207 (nucleophile) is an active-site residue.

It belongs to the YkuD family. As to quaternary structure, interacts with DsbG.

The protein resides in the periplasm. Its pathway is cell wall biogenesis; peptidoglycan biosynthesis. In terms of biological role, responsible, at least in part, for anchoring of the major outer membrane lipoprotein (Lpp, also known as the Braun lipoprotein) to the peptidoglycan via a meso-diaminopimelyl-L-Lys- bond on the terminal residue of Lpp. The polypeptide is Probable L,D-transpeptidase ErfK/SrfK (erfK) (Escherichia coli (strain K12)).